The primary structure comprises 161 residues: Phosphopantetheine adenylyltransferase (161 aa).

Serine 9 provides a ligand contact to substrate. ATP-binding positions include 9–10 and histidine 17; that span reads SF. Substrate-binding residues include lysine 41, leucine 73, and arginine 87. ATP-binding positions include 88–90, glutamate 98, and 123–129; these read GIR and TGFISST.

Belongs to the bacterial CoaD family. In terms of assembly, homohexamer. The cofactor is Mg(2+).

It is found in the cytoplasm. It catalyses the reaction (R)-4'-phosphopantetheine + ATP + H(+) = 3'-dephospho-CoA + diphosphate. Its pathway is cofactor biosynthesis; coenzyme A biosynthesis; CoA from (R)-pantothenate: step 4/5. Functionally, reversibly transfers an adenylyl group from ATP to 4'-phosphopantetheine, yielding dephospho-CoA (dPCoA) and pyrophosphate. The polypeptide is Phosphopantetheine adenylyltransferase (Psychromonas ingrahamii (strain DSM 17664 / CCUG 51855 / 37)).